Reading from the N-terminus, the 758-residue chain is Matrix metalloproteinase-2 (758 aa).

Residues 1–17 (MFSKYVLATLLALFAQS) form the signal peptide. Residue H257 coordinates Zn(2+). Residue E258 is part of the active site. 2 residues coordinate Zn(2+): H261 and H267. The disordered stretch occupies residues 335-514 (AYWPWNNPSN…HNKPRKPKPD (180 aa)). Over residues 338–348 (PWNNPSNNPNN) the composition is skewed to low complexity. Positions 349–476 (DRNRARERQE…EWERRNRNGA (128 aa)) are enriched in basic and acidic residues. Over residues 479 to 494 (PVTPTANTTPRPTNKP) the composition is skewed to low complexity. The span at 499 to 510 (HRQHHHHNKPRK) shows a compositional bias: basic residues. 4 Hemopexin repeats span residues 513 to 561 (PDSC…WSAL), 565 to 610 (LTKV…GLPP), 612 to 659 (LTHI…WSGV), and 660 to 707 (GYNI…WMQC). Residues C516 and C707 are joined by a disulfide bond. A helical transmembrane segment spans residues 739–756 (LRINHFILSILLLAIANW). Over 757–758 (RS) the chain is Cytoplasmic.

It belongs to the peptidase M10A family. Requires Ca(2+) as cofactor. Zn(2+) serves as cofactor. As to expression, widely expressed during embryogenesis including in the mesoderm, developing gut, central and peripheral nervous systems and imaginal disks. In the embryonic nervous system, expressed in neurons and glia. In third instar larvae, strongly expressed in the morphogenetic furrow of eye imaginal disks and in the optic lobe region of the brain. Expressed in posterior follicle cells in all mature stage 14 follicles but not in earlier follicles and is also expressed in some anterior follicle cells that help form dorsal eggshell structures.

It localises to the cell membrane. In terms of biological role, has metalloproteinase activity. Proteolytically cleaves the PGRP-LC receptor; involved in gut-fat body innate immunological communication (GFIC)-mediated activation of the imd/Relish signal transduction pathway. Required for larval tissue histolysis during metamorphosis and is involved in pupal head eversion and fusion of the wing imaginal tissue. Required for growth of the dorsal air sac primordium and development of the dorsal air sacs. Promotes embryonic motor axon fasciculation. Cleaves and activates frac to promote motor axon bundling during outgrowth. Promotes the reshaping of adult sensory neuron dendrites from a radial to lattice-like shape which occurs after eclosion by degrading the basement membrane on which the dendrites grow. Involved in inhibition of follicle stem cell proliferation by cleaving Dlp, inhibiting its interaction with wg and preventing Dlp-mediated spreading of wg to follicle stem cells to enhance their proliferation. Plays a role in wound healing. Involved in fat body dissociation which occurs during metamorphosis by degrading basement membrane components, leading to destruction of cell-basement membrane junctions. Required for posterior follicle cell degradation and ovulation. In Drosophila melanogaster (Fruit fly), this protein is Matrix metalloproteinase-2.